The chain runs to 561 residues: Potassium-transporting ATPase potassium-binding subunit (561 aa).

Helical transmembrane passes span 4 to 24 (IVMQDAFFVVLLLVLAVPLGI), 65 to 85 (AVSVLAFSAVGFVFVMAVLML), 133 to 153 (IGLTVQNFVSAATGIAVLFAV), 177 to 197 (LYILLPLSLILALLLVSQGVV), 253 to 273 (FTNLIEMLAILLIPVALVVMF), 285 to 305 (AIMTAMMIVFVIGVVAITISE), 380 to 400 (GLYGMIGFIILTVFIAGLLVG), 417 to 437 (MVCLLILVPPLLTLFGTAVAV), 484 to 504 (MVGAVMMLLARFIPLVAALYL), and 528 to 548 (FIGLLIGVVVLVGALSFLPAL).

This sequence belongs to the KdpA family. The system is composed of three essential subunits: KdpA, KdpB and KdpC.

It is found in the cell membrane. Part of the high-affinity ATP-driven potassium transport (or Kdp) system, which catalyzes the hydrolysis of ATP coupled with the electrogenic transport of potassium into the cytoplasm. This subunit binds the extracellular potassium ions and delivers the ions to the membrane domain of KdpB through an intramembrane tunnel. This chain is Potassium-transporting ATPase potassium-binding subunit, found in Listeria monocytogenes serotype 4b (strain CLIP80459).